A 126-amino-acid polypeptide reads, in one-letter code: DNA-directed RNA polymerase subunit omega (126 aa).

It belongs to the RNA polymerase subunit omega family. In terms of assembly, the RNAP catalytic core consists of 2 alpha, 1 beta, 1 beta' and 1 omega subunit. When a sigma factor is associated with the core the holoenzyme is formed, which can initiate transcription.

The catalysed reaction is RNA(n) + a ribonucleoside 5'-triphosphate = RNA(n+1) + diphosphate. Promotes RNA polymerase assembly. Latches the N- and C-terminal regions of the beta' subunit thereby facilitating its interaction with the beta and alpha subunits. The chain is DNA-directed RNA polymerase subunit omega from Paramagnetospirillum magneticum (strain ATCC 700264 / AMB-1) (Magnetospirillum magneticum).